The primary structure comprises 164 residues: UBA-like domain-containing protein 2 (164 aa).

An N-acetylserine modification is found at Ser2. The interval Ser128–Arg164 is disordered. The segment covering Gly146 to Arg164 has biased composition (low complexity).

The protein belongs to the UBALD family.

This is UBA-like domain-containing protein 2 (UBALD2) from Homo sapiens (Human).